A 290-amino-acid polypeptide reads, in one-letter code: OTU domain-containing protein 6A (290 aa).

Residues 27–117 (QTLKASVPKN…RRHQERMPAA (91 aa)) form a disordered region. Basic and acidic residues predominate over residues 49–68 (SRLEAEMEQRHKQELEKFGE). Basic residues predominate over residues 95-108 (KAQKRRDRRAHQER). The 135-residue stretch at 142 to 276 (LEMKTIPADG…GEHYNSVKPI (135 aa)) folds into the OTU domain. Residues 147–153 (IPADGHC) form a cys-loop region. Asp-150 is a catalytic residue. Cys-153 serves as the catalytic Nucleophile. Residues 211–221 (IVHNASWGGQL) are variable-loop. A his-loop region spans residues 259-269 (YLHYACDFGEH). His-269 is a catalytic residue.

The catalysed reaction is Thiol-dependent hydrolysis of ester, thioester, amide, peptide and isopeptide bonds formed by the C-terminal Gly of ubiquitin (a 76-residue protein attached to proteins as an intracellular targeting signal).. Functionally, deubiquitinating enzyme that hydrolyzes 'Lys-27'-, 'Lys-29'- and 'Lys-33'-linked polyubiquitin chains. Also able to hydrolyze 'Lys-11'-linked ubiquitin chains. In Mus musculus (Mouse), this protein is OTU domain-containing protein 6A (Otud6a).